A 123-amino-acid chain; its full sequence is DNA-directed RNA polymerase subunit omega (123 aa).

The disordered stretch occupies residues 67–123 (EESAADSLSLGGFSTADVEAEVGGGPVQPDPGASQERAFDEAADGTAQGSGDPDPTT).

The protein belongs to the RNA polymerase subunit omega family. In terms of assembly, the RNAP catalytic core consists of 2 alpha, 1 beta, 1 beta' and 1 omega subunit. When a sigma factor is associated with the core the holoenzyme is formed, which can initiate transcription.

It carries out the reaction RNA(n) + a ribonucleoside 5'-triphosphate = RNA(n+1) + diphosphate. Its function is as follows. Promotes RNA polymerase assembly. Latches the N- and C-terminal regions of the beta' subunit thereby facilitating its interaction with the beta and alpha subunits. The polypeptide is DNA-directed RNA polymerase subunit omega (Halorhodospira halophila (strain DSM 244 / SL1) (Ectothiorhodospira halophila (strain DSM 244 / SL1))).